Consider the following 277-residue polypeptide: Glutamate racemase (277 aa).

Substrate contacts are provided by residues 25–26 (DS) and 57–58 (YG). Cys-89 serves as the catalytic Proton donor/acceptor. 90–91 (NT) contributes to the substrate binding site. Residue Cys-204 is the Proton donor/acceptor of the active site. 205–206 (TH) is a substrate binding site.

It belongs to the aspartate/glutamate racemases family.

The catalysed reaction is L-glutamate = D-glutamate. It functions in the pathway cell wall biogenesis; peptidoglycan biosynthesis. Its function is as follows. Provides the (R)-glutamate required for cell wall biosynthesis. This is Glutamate racemase from Brucella abortus (strain 2308).